The sequence spans 377 residues: P2Y purinoceptor 2 (377 aa).

At 1–32 the chain is on the extracellular side; sequence MAADLGPWNDTINGTWDGDELGYRCRFNEDFK. 2 N-linked (GlcNAc...) asparagine glycosylation sites follow: N9 and N13. The chain crosses the membrane as a helical span at residues 33–59; it reads YVLLPVSYGVVCVPGLCLNAVALYIFL. Over 60–70 the chain is Cytoplasmic; that stretch reads CRLKTWNASTT. Residues 71–93 form a helical membrane-spanning segment; it reads YMFHLAVSDALYAASLPLLVYYY. At 94–110 the chain is on the extracellular side; sequence ARGDHWPFSTVLCKLVR. C106 and C183 are disulfide-bonded. The chain crosses the membrane as a helical span at residues 111 to 129; the sequence is FLFYTNLYCSILFLTCISV. The Cytoplasmic segment spans residues 130–152; the sequence is HRCLGVLRPLRSLRWGRARYARR. The helical transmembrane segment at 153–172 threads the bilayer; it reads VAGAVWVLVLACQAPVLYFV. Over 173–194 the chain is Extracellular; the sequence is TTSARGGRVTCHDTSAPELFSR. Residues 195–220 form a helical membrane-spanning segment; sequence FVAYSSVMLGLLFAVPFAVILVCYVL. The Cytoplasmic portion of the chain corresponds to 221–246; sequence MARRLLKPAYGTSGGLPRAKRKSVRT. Residues 247–269 traverse the membrane as a helical segment; it reads IAVVLAVFALCFLPFHVTRTLYY. Residues 270 to 287 are Extracellular-facing; that stretch reads SFRSLDLSCHTLNAINMA. Residues 288-309 traverse the membrane as a helical segment; that stretch reads YKVTRPLASANSCLDPVLYFLA. At 310 to 377 the chain is on the cytoplasmic side; that stretch reads GQRLVRFARD…GSENTKDIRL (68 aa). A disordered region spans residues 318–377; that stretch reads RDAKPPTGPSPATPARRRLGLRRSDRTDMQRIEDVLGSSEDSRRTESTPAGSENTKDIRL. Residues 339–363 are compositionally biased toward basic and acidic residues; it reads RRSDRTDMQRIEDVLGSSEDSRRTE.

It belongs to the G-protein coupled receptor 1 family. As to expression, spleen, testis, kidney, liver, lung, heart and brain.

The protein localises to the cell membrane. Functionally, receptor for ATP and UTP coupled to G-proteins that activate a phosphatidylinositol-calcium second messenger system. The affinity range is UTP = ATP &gt; ATP-gamma-S &gt;&gt; 2-methylthio-ATP = ADP. This Homo sapiens (Human) protein is P2Y purinoceptor 2 (P2RY2).